Here is a 345-residue protein sequence, read N- to C-terminus: Aspartate--ammonia ligase (345 aa).

This sequence belongs to the class-II aminoacyl-tRNA synthetase family. AsnA subfamily.

It localises to the cytoplasm. The catalysed reaction is L-aspartate + NH4(+) + ATP = L-asparagine + AMP + diphosphate + H(+). It functions in the pathway amino-acid biosynthesis; L-asparagine biosynthesis; L-asparagine from L-aspartate (ammonia route): step 1/1. The polypeptide is Aspartate--ammonia ligase (Bacteroides thetaiotaomicron (strain ATCC 29148 / DSM 2079 / JCM 5827 / CCUG 10774 / NCTC 10582 / VPI-5482 / E50)).